Reading from the N-terminus, the 83-residue chain is Small ribosomal subunit protein uS17 (83 aa).

This sequence belongs to the universal ribosomal protein uS17 family. As to quaternary structure, part of the 30S ribosomal subunit.

One of the primary rRNA binding proteins, it binds specifically to the 5'-end of 16S ribosomal RNA. This is Small ribosomal subunit protein uS17 from Campylobacter jejuni subsp. jejuni serotype O:6 (strain 81116 / NCTC 11828).